Here is a 156-residue protein sequence, read N- to C-terminus: Small ribosomal subunit protein uS7 (156 aa).

This sequence belongs to the universal ribosomal protein uS7 family. In terms of assembly, part of the 30S ribosomal subunit. Contacts proteins S9 and S11.

One of the primary rRNA binding proteins, it binds directly to 16S rRNA where it nucleates assembly of the head domain of the 30S subunit. Is located at the subunit interface close to the decoding center, probably blocks exit of the E-site tRNA. The chain is Small ribosomal subunit protein uS7 from Clostridium botulinum (strain Kyoto / Type A2).